Reading from the N-terminus, the 310-residue chain is Homoserine kinase (310 aa).

91-101 (PIGSGLGSSAC) is an ATP binding site.

The protein belongs to the GHMP kinase family. Homoserine kinase subfamily.

It is found in the cytoplasm. It catalyses the reaction L-homoserine + ATP = O-phospho-L-homoserine + ADP + H(+). The protein operates within amino-acid biosynthesis; L-threonine biosynthesis; L-threonine from L-aspartate: step 4/5. Its function is as follows. Catalyzes the ATP-dependent phosphorylation of L-homoserine to L-homoserine phosphate. The sequence is that of Homoserine kinase from Escherichia coli (strain SMS-3-5 / SECEC).